The chain runs to 599 residues: 2-succinyl-5-enolpyruvyl-6-hydroxy-3-cyclohexene-1-carboxylate synthase (599 aa).

The span at 1–21 shows a compositional bias: low complexity; the sequence is MTSENPLDPNNAYAAADDAPL. The disordered stretch occupies residues 1–35; it reads MTSENPLDPNNAYAAADDAPLSEGDPTGAPADSGS.

Belongs to the TPP enzyme family. MenD subfamily. Homodimer. It depends on Mg(2+) as a cofactor. Mn(2+) is required as a cofactor. Thiamine diphosphate serves as cofactor.

It catalyses the reaction isochorismate + 2-oxoglutarate + H(+) = 5-enolpyruvoyl-6-hydroxy-2-succinyl-cyclohex-3-ene-1-carboxylate + CO2. It participates in quinol/quinone metabolism; 1,4-dihydroxy-2-naphthoate biosynthesis; 1,4-dihydroxy-2-naphthoate from chorismate: step 2/7. The protein operates within quinol/quinone metabolism; menaquinone biosynthesis. Functionally, catalyzes the thiamine diphosphate-dependent decarboxylation of 2-oxoglutarate and the subsequent addition of the resulting succinic semialdehyde-thiamine pyrophosphate anion to isochorismate to yield 2-succinyl-5-enolpyruvyl-6-hydroxy-3-cyclohexene-1-carboxylate (SEPHCHC). This is 2-succinyl-5-enolpyruvyl-6-hydroxy-3-cyclohexene-1-carboxylate synthase from Arthrobacter sp. (strain FB24).